The sequence spans 382 residues: Membrane protein MLC1 (382 aa).

Over residues 1–28 (MTREGQFREELGYDRMPTLERGRQDAGR) the composition is skewed to basic and acidic residues. The tract at residues 1–43 (MTREGQFREELGYDRMPTLERGRQDAGRQDPGSYTPDSKPKDL) is disordered. 4 helical membrane-spanning segments follow: residues 58-78 (WVFS…SLYL), 88-107 (YLRC…FAVG), 117-137 (FQIL…WFGC), and 148-168 (INFN…TVII). Phosphoserine is present on residues serine 183, serine 185, and serine 188. The next 4 helical transmembrane spans lie at 205–225 (SVVE…ALNV), 234–254 (LSVT…ASHV), 263–283 (LVEV…TASG), and 309–329 (LLLL…GTAI).

As to quaternary structure, interacts with ATP1B1. Part of a complex containing ATP1B1, TRPV4, AQP4 and HEPACAM.

It localises to the membrane. It is found in the cell membrane. Its subcellular location is the cytoplasm. The protein resides in the perinuclear region. The protein localises to the endoplasmic reticulum. Transmembrane protein mainly expressed in brain astrocytes that may play a role in transport across the blood-brain and brain-cerebrospinal fluid barriers. Regulates the response of astrocytes to hypo-osmosis by promoting calcium influx. May function as regulatory protein of membrane protein complexes such as ion channels. The sequence is that of Membrane protein MLC1 from Mus musculus (Mouse).